The primary structure comprises 321 residues: Lipoyl synthase (321 aa).

Residues C68, C73, C79, C94, C98, C101, and S308 each contribute to the [4Fe-4S] cluster site. Residues 80–297 (FNHGTATFMI…KAEAMAMGFT (218 aa)) enclose the Radical SAM core domain.

Belongs to the radical SAM superfamily. Lipoyl synthase family. It depends on [4Fe-4S] cluster as a cofactor.

It is found in the cytoplasm. The catalysed reaction is [[Fe-S] cluster scaffold protein carrying a second [4Fe-4S](2+) cluster] + N(6)-octanoyl-L-lysyl-[protein] + 2 oxidized [2Fe-2S]-[ferredoxin] + 2 S-adenosyl-L-methionine + 4 H(+) = [[Fe-S] cluster scaffold protein] + N(6)-[(R)-dihydrolipoyl]-L-lysyl-[protein] + 4 Fe(3+) + 2 hydrogen sulfide + 2 5'-deoxyadenosine + 2 L-methionine + 2 reduced [2Fe-2S]-[ferredoxin]. It functions in the pathway protein modification; protein lipoylation via endogenous pathway; protein N(6)-(lipoyl)lysine from octanoyl-[acyl-carrier-protein]: step 2/2. Its function is as follows. Catalyzes the radical-mediated insertion of two sulfur atoms into the C-6 and C-8 positions of the octanoyl moiety bound to the lipoyl domains of lipoate-dependent enzymes, thereby converting the octanoylated domains into lipoylated derivatives. The protein is Lipoyl synthase of Cronobacter sakazakii (strain ATCC BAA-894) (Enterobacter sakazakii).